We begin with the raw amino-acid sequence, 32 residues long: Ranatuerin-2BYa (32 aa).

An intrachain disulfide couples Cys-27 to Cys-32.

In terms of tissue distribution, expressed by the skin glands.

The protein resides in the secreted. Its function is as follows. Antibacterial activity against Gram-positive bacterium S.aureus and Gram-negative bacterium E.coli. Weak hemolytic activity. This Rana boylii (Foothill yellow-legged frog) protein is Ranatuerin-2BYa.